The following is a 137-amino-acid chain: MRTLWIMAVLLVGVEGSLFELGKMILQETGKNPAKSYGAYGCNCGVLGRGKPKDATDRCCYVHKCCYKKLTGCNPKKDRYSYSWKDKTIVCGENNSCLKELCECDKAVAICLRENLNTYNKKYRYYLKPLCKKADAC.

The first 16 residues, 1–16 (MRTLWIMAVLLVGVEG), serve as a signal peptide directing secretion. 7 disulfide bridges follow: cysteine 42/cysteine 131, cysteine 44/cysteine 60, cysteine 59/cysteine 111, cysteine 65/cysteine 137, cysteine 66/cysteine 104, cysteine 73/cysteine 97, and cysteine 91/cysteine 102. Residues 121–133 (KKYRYYLKPLCKK) are important for membrane-damaging activities in eukaryotes and bacteria; heparin-binding.

The protein belongs to the phospholipase A2 family. Group II subfamily. K49 sub-subfamily. Homodimer; non-covalently linked. Binds to heparin. It binds long-chain fatty acids covalently by a rapid, spontaneous, and autocatalytic process. When acylated, it binds to the surface of liposomes and isolated muscle membranes, with the fatty acid moiety inserted into the lipid bilayer and possibly acting as an anchor. In terms of tissue distribution, expressed by the venom gland.

It is found in the secreted. Heparin inhibits the myotoxic activity. Suramin inhibits the myotoxic activity. High level of membrane cholesterol content reduces cytolytic activity, whereas low level of membrane cholesterol content increases cytolytic activity. Snake venom phospholipase A2 homolog that lacks enzymatic activity. Is myotoxic and induces a dose-dependent edema in the mouse foot pad. Also exhibits strong anticoagulant effects by binding to factor Xa (F10) and inhibiting the prothrombinase activity (IC(50) is 3 nM). In addition, it shows cytotoxic activity to a variety of cell types and bactericidal activity to a variety of Gram-negative and Gram-positive bacteria. Also induces a very rapid release of large amounts of potassium ions and ATP from muscle cells, which accounts for the pain reaction characteristic of viperid envenomations. The released ATP amplifies the effect of the myotoxins, acting as a 'danger signal', which spreads and causes further damage by acting on purinergic receptors. A model of myotoxic mechanism has been proposed: an apo Lys49-PLA2 is activated by the entrance of a hydrophobic molecule (e.g. fatty acid) at the hydrophobic channel of the protein leading to a reorientation of a monomer. This reorientation causes a transition between 'inactive' to 'active' states, causing alignment of C-terminal and membrane-docking sites (MDoS) side-by-side and putting the membrane-disruption sites (MDiS) in the same plane, exposed to solvent and in a symmetric position for both monomers. The MDoS region stabilizes the toxin on membrane by the interaction of charged residues with phospholipid head groups. Subsequently, the MDiS region destabilizes the membrane with penetration of hydrophobic residues. This insertion causes a disorganization of the membrane, allowing an uncontrolled influx of ions (i.e. calcium and sodium), and eventually triggering irreversible intracellular alterations and cell death. The polypeptide is Basic phospholipase A2 homolog 2 (Bothrops asper (Terciopelo)).